Reading from the N-terminus, the 160-residue chain is Large ribosomal subunit protein bL17 (160 aa).

A disordered region spans residues 128–160; it reads KKATKTRRSRKRKSADVVVEAAPAEETPKAAEE. The span at 129 to 140 shows a compositional bias: basic residues; it reads KATKTRRSRKRK.

Belongs to the bacterial ribosomal protein bL17 family. In terms of assembly, part of the 50S ribosomal subunit. Contacts protein L32.

This is Large ribosomal subunit protein bL17 from Porphyromonas gingivalis (strain ATCC 33277 / DSM 20709 / CIP 103683 / JCM 12257 / NCTC 11834 / 2561).